Consider the following 419-residue polypeptide: Phosphoribosylamine--glycine ligase (419 aa).

The ATP-grasp domain occupies lysine 109–glutamate 311. Residue alanine 135–serine 191 participates in ATP binding. 2 residues coordinate Mg(2+): glutamate 281 and asparagine 283.

Belongs to the GARS family. Requires Mg(2+) as cofactor. Mn(2+) is required as a cofactor.

It catalyses the reaction 5-phospho-beta-D-ribosylamine + glycine + ATP = N(1)-(5-phospho-beta-D-ribosyl)glycinamide + ADP + phosphate + H(+). It functions in the pathway purine metabolism; IMP biosynthesis via de novo pathway; N(1)-(5-phospho-D-ribosyl)glycinamide from 5-phospho-alpha-D-ribose 1-diphosphate: step 2/2. This Synechocystis sp. (strain ATCC 27184 / PCC 6803 / Kazusa) protein is Phosphoribosylamine--glycine ligase.